A 623-amino-acid polypeptide reads, in one-letter code: Prothrombin (623 aa).

An N-terminal signal peptide occupies residues 1–24 (MAHVRGLQLPGCLALAALCTLVHS). The propeptide occupies 25-43 (QHVFLAPQQALSLLQRVRR). A Gla domain is found at 44-90 (ANSVFLEEVRKGNLERECVEETCSYEEAFEALESSTATDVFWAKYTA). 10 positions are modified to 4-carboxyglutamate: Glu50, Glu51, Glu58, Glu60, Glu63, Glu64, Glu69, Glu70, Glu73, and Glu76. An intrachain disulfide couples Cys61 to Cys66. 11 disulfide bridges follow: Cys91–Cys104, Cys109–Cys187, Cys130–Cys170, Cys158–Cys182, Cys214–Cys292, Cys235–Cys275, Cys263–Cys287, Cys337–Cys483, Cys392–Cys408, Cys537–Cys551, and Cys565–Cys595. Kringle domains follow at residues 108–187 (NCAE…IPVC) and 213–292 (QCVP…LNYC). 2 N-linked (GlcNAc...) asparagine glycosylation sites follow: Asn122 and Asn144. The Peptidase S1 domain maps to 365 to 619 (IVEGSDAEIG…LKKWIQKVID (255 aa)). The active-site Charge relay system is the His407. Asn417 carries N-linked (GlcNAc...) asparagine glycosylation. Asp463 (charge relay system) is an active-site residue. The tract at residues 552 to 574 (AGYKPDEGKRGDACEGDSGGPFV) is high affinity receptor-binding region which also known as the TP508 peptide. The active-site Charge relay system is Ser569.

It belongs to the peptidase S1 family. Heterodimer (named alpha-thrombin) of a light and a heavy chain; disulfide-linked. Forms a heterodimer with SERPINA5. In plasma, interacts (via N-terminus) with alpha-1-microglobulin; this interaction does not prevent the activation of prothrombin to thrombin. The gamma-carboxyglutamyl residues, which bind calcium ions, result from the carboxylation of glutamyl residues by a microsomal enzyme, the vitamin K-dependent carboxylase. The modified residues are necessary for the calcium-dependent interaction with a negatively charged phospholipid surface, which is essential for the conversion of prothrombin to thrombin. Post-translationally, in the penultimate step of the coagulation cascade, prothrombin is converted to thrombin by the prothrombinase complex composed of factor Xa (F10), cofactor Va (F5), and phospholipids. This activation requires factor Xa-catalyzed sequential cleavage at 2 sites, Arg-315 and Arg-364, along 2 possible pathways. In the first pathway, the first cleavage occurs at Arg-315, leading to the formation of the inactive intermediate prethrombin-2. This pathway preferentially occurs on platelets and in the absence of cofactor Va. In the second pathway, the first cleavage occurs at Arg-364, which separates protease domain into 2 chains that remain connected through a disulfide bond and generates the active intermediate meizothrombin. The presence of cofactor Va directs activation along the meizothrombin pathway and greatly accelerates the rate of cleavage at Arg-364, but has a smaller effect on the cleavage of meizothrombin at Arg-315. Meizothrombin accumulates as an intermediate when prothrombinase is assembled on the membrane of red blood cells.

It catalyses the reaction Selective cleavage of Arg-|-Gly bonds in fibrinogen to form fibrin and release fibrinopeptides A and B.. Activity is promoted in the presence of negatively charged surfaces, such as polyphosphate and dextran sulfate. Inhibited by SERPINA5. Functionally, thrombin, which cleaves bonds after Arg and Lys, converts fibrinogen to fibrin and activates factors V, VII, VIII, XIII, and, in complex with thrombomodulin, protein C. Functions in blood homeostasis, inflammation and wound healing. Activates coagulation factor XI (F11); activation is promoted by the contact with negatively charged surfaces. Triggers the production of pro-inflammatory cytokines, such as MCP-1/CCL2 and IL8/CXCL8, in endothelial cells. The polypeptide is Prothrombin (F2) (Pongo abelii (Sumatran orangutan)).